We begin with the raw amino-acid sequence, 484 residues long: Glutamate--tRNA ligase (484 aa).

The short motif at 11 to 21 is the 'HIGH' region element; that stretch reads PSPTGYLHIGN. The short motif at 252–256 is the 'KMSKS' region element; it reads KLSKR. K255 contacts ATP.

This sequence belongs to the class-I aminoacyl-tRNA synthetase family. Glutamate--tRNA ligase type 1 subfamily. In terms of assembly, monomer.

The protein localises to the cytoplasm. The enzyme catalyses tRNA(Glu) + L-glutamate + ATP = L-glutamyl-tRNA(Glu) + AMP + diphosphate. Catalyzes the attachment of glutamate to tRNA(Glu) in a two-step reaction: glutamate is first activated by ATP to form Glu-AMP and then transferred to the acceptor end of tRNA(Glu). This Staphylococcus aureus (strain MRSA252) protein is Glutamate--tRNA ligase.